The sequence spans 283 residues: Pantothenate synthetase (283 aa).

Residue 30-37 coordinates ATP; it reads MGALHEGH. The active-site Proton donor is the H37. Q61 contacts (R)-pantoate. Residue Q61 coordinates beta-alanine. Residue 147–150 coordinates ATP; it reads GEKD. Q153 lines the (R)-pantoate pocket. ATP-binding positions include V176 and 184-187; that span reads VSSR.

The protein belongs to the pantothenate synthetase family. Homodimer.

It is found in the cytoplasm. It catalyses the reaction (R)-pantoate + beta-alanine + ATP = (R)-pantothenate + AMP + diphosphate + H(+). The protein operates within cofactor biosynthesis; (R)-pantothenate biosynthesis; (R)-pantothenate from (R)-pantoate and beta-alanine: step 1/1. Its function is as follows. Catalyzes the condensation of pantoate with beta-alanine in an ATP-dependent reaction via a pantoyl-adenylate intermediate. The polypeptide is Pantothenate synthetase (Chlorobium luteolum (strain DSM 273 / BCRC 81028 / 2530) (Pelodictyon luteolum)).